Consider the following 294-residue polypeptide: MKKRIYAPATIANFGPGFDVFGMAIEEPGDEVIVKESDSFEIEVEGYDVPRDENNVAVISAKALFKMVGEEGGVKIRLKKGVRPKSGLGSSGASSVAGALAAARVLGVDNDELIIMAALEGEKAASGSPHGDNVIPSYYGGFNILESLNPLRVHRVDVELNVVVVLPEVEVPTKEARRIVPEKVPLKDAIKNLAMASSLVLALKEGDIETVGRLLDDNLALPYRKKLMPWFDEVRKAGLEAGAYGVTVSGSGPSLFAIGENLKDIGKAMKEKFEELGIRAEFWITKTGRGAKWY.

83 to 93 serves as a coordination point for ATP; sequence RPKSGLGSSGA.

This sequence belongs to the GHMP kinase family. Homoserine kinase subfamily.

The protein localises to the cytoplasm. The catalysed reaction is L-homoserine + ATP = O-phospho-L-homoserine + ADP + H(+). It participates in amino-acid biosynthesis; L-threonine biosynthesis; L-threonine from L-aspartate: step 4/5. Functionally, catalyzes the ATP-dependent phosphorylation of L-homoserine to L-homoserine phosphate. This Pyrococcus abyssi (strain GE5 / Orsay) protein is Homoserine kinase.